Consider the following 257-residue polypeptide: Imidazole glycerol phosphate synthase subunit HisF (257 aa).

Residues Asp-12 and Asp-131 contribute to the active site.

The protein belongs to the HisA/HisF family. Heterodimer of HisH and HisF.

The protein resides in the cytoplasm. The catalysed reaction is 5-[(5-phospho-1-deoxy-D-ribulos-1-ylimino)methylamino]-1-(5-phospho-beta-D-ribosyl)imidazole-4-carboxamide + L-glutamine = D-erythro-1-(imidazol-4-yl)glycerol 3-phosphate + 5-amino-1-(5-phospho-beta-D-ribosyl)imidazole-4-carboxamide + L-glutamate + H(+). It functions in the pathway amino-acid biosynthesis; L-histidine biosynthesis; L-histidine from 5-phospho-alpha-D-ribose 1-diphosphate: step 5/9. Functionally, IGPS catalyzes the conversion of PRFAR and glutamine to IGP, AICAR and glutamate. The HisF subunit catalyzes the cyclization activity that produces IGP and AICAR from PRFAR using the ammonia provided by the HisH subunit. This chain is Imidazole glycerol phosphate synthase subunit HisF, found in Marinobacter nauticus (strain ATCC 700491 / DSM 11845 / VT8) (Marinobacter aquaeolei).